Consider the following 424-residue polypeptide: Protein pellino (424 aa).

The tract at residues 1 to 21 (MVKRTDGTESPILAEDGGDGH) is disordered. A Phosphoserine modification is found at Ser10.

Belongs to the pellino family. Interacts with pll.

In terms of biological role, scaffold protein involved in the Toll signaling pathway via its interaction with pelle/pll kinase. The chain is Protein pellino (Pli) from Drosophila melanogaster (Fruit fly).